Here is a 305-residue protein sequence, read N- to C-terminus: Protein EXORDIUM-like 2 (305 aa).

The signal sequence occupies residues 1–23 (MASNYRFAIFLTLFFATAGFSAA). N-linked (GlcNAc...) asparagine glycosylation is present at asparagine 44.

The protein belongs to the EXORDIUM family.

It is found in the secreted. It localises to the extracellular space. Its subcellular location is the apoplast. Functionally, may play a role in a brassinosteroid-dependent regulation of growth and development. In Arabidopsis thaliana (Mouse-ear cress), this protein is Protein EXORDIUM-like 2 (EXL2).